Reading from the N-terminus, the 408-residue chain is Na(+)-translocating NADH-quinone reductase subunit F (408 aa).

A helical membrane pass occupies residues 4–24 (IYLGVGMFIAIVLALVLIIMF). One can recognise a 2Fe-2S ferredoxin-type domain in the interval 33–127 (GEVTISINGD…DMDIELPEEI (95 aa)). Residues Cys-70, Cys-76, Cys-79, and Cys-111 each contribute to the [2Fe-2S] cluster site. The FAD-binding FR-type domain occupies 130 to 270 (IKKWDCEVIS…SGPFGEFFAK (141 aa)).

This sequence belongs to the NqrF family. Composed of six subunits; NqrA, NqrB, NqrC, NqrD, NqrE and NqrF. Requires [2Fe-2S] cluster as cofactor. FAD is required as a cofactor.

It is found in the cell inner membrane. It catalyses the reaction a ubiquinone + n Na(+)(in) + NADH + H(+) = a ubiquinol + n Na(+)(out) + NAD(+). Functionally, NQR complex catalyzes the reduction of ubiquinone-1 to ubiquinol by two successive reactions, coupled with the transport of Na(+) ions from the cytoplasm to the periplasm. The first step is catalyzed by NqrF, which accepts electrons from NADH and reduces ubiquinone-1 to ubisemiquinone by a one-electron transfer pathway. This is Na(+)-translocating NADH-quinone reductase subunit F from Pseudoalteromonas atlantica (strain T6c / ATCC BAA-1087).